Here is a 349-residue protein sequence, read N- to C-terminus: Insulin gene enhancer protein ISL-1 (349 aa).

LIM zinc-binding domains are found at residues 17–70 (CVGC…CKRD) and 79–133 (CAKC…RADH). Positions 181–240 (TTRVRTVLNEKQLHTLRTCYAANPRPDALMKEQLVEMTGLSPRVIRVWFQNKRCKDKKRS) form a DNA-binding region, homeobox. A disordered region spans residues 312-349 (VNFSEGGPGSNSTGSEVASMSSQLPDTPNSMVASPIEA). The span at 321 to 343 (SNSTGSEVASMSSQLPDTPNSMV) shows a compositional bias: polar residues.

Its subcellular location is the nucleus. Functionally, acts as a transcriptional regulator. Recognizes and binds to the consensus octamer binding site 5'-ATAATTAA-3' in promoter of target genes. Plays a fundamental role in the gene regulatory network essential for retinal ganglion cell (RGC) differentiation. Binds to insulin gene enhancer sequences. Defines subclasses of motoneurons that segregate into columns in the spinal cord and select distinct axon pathways. Acts in conjunction with LHX1, LHX3 and ISL2. Binds to insulin gene enhancer sequences. Essential for heart development. The protein is Insulin gene enhancer protein ISL-1 (ISL1) of Gallus gallus (Chicken).